A 689-amino-acid chain; its full sequence is Glycine--tRNA ligase beta subunit (689 aa).

This sequence belongs to the class-II aminoacyl-tRNA synthetase family. As to quaternary structure, tetramer of two alpha and two beta subunits.

It localises to the cytoplasm. It catalyses the reaction tRNA(Gly) + glycine + ATP = glycyl-tRNA(Gly) + AMP + diphosphate. This is Glycine--tRNA ligase beta subunit from Salmonella typhi.